A 166-amino-acid chain; its full sequence is Phospholipase A2 inhibitor clone 11 (166 aa).

An N-terminal signal peptide occupies residues 1 to 19 (MRLILLSGLLLLGIFLANG). Residues 46–161 (LKGSFLIVHK…CDDNLLVVCE (116 aa)) form the C-type lectin domain. Intrachain disulfides connect Cys-83–Cys-160 and Cys-138–Cys-152. Residue Asn-122 is glycosylated (N-linked (GlcNAc...) asparagine).

It belongs to the alpha-type phospholipase A2 inhibitor family. Homotrimer; non-covalently linked. As to expression, expressed by the liver.

The protein localises to the secreted. This phospholipase A2 inhibitor binds directly phospholipase A2 in the presence or absence of calcium. This is Phospholipase A2 inhibitor clone 11 from Bothrops neuwiedi (Neuwied's lancehead).